Reading from the N-terminus, the 377-residue chain is Nitric oxide reductase FlRd-NAD(+) reductase (377 aa).

It belongs to the FAD-dependent oxidoreductase family. The cofactor is FAD.

The protein resides in the cytoplasm. It catalyses the reaction 2 reduced [nitric oxide reductase rubredoxin domain] + NAD(+) + H(+) = 2 oxidized [nitric oxide reductase rubredoxin domain] + NADH. Its pathway is nitrogen metabolism; nitric oxide reduction. Its function is as follows. One of at least two accessory proteins for anaerobic nitric oxide (NO) reductase. Reduces the rubredoxin moiety of NO reductase. This is Nitric oxide reductase FlRd-NAD(+) reductase from Escherichia coli O139:H28 (strain E24377A / ETEC).